We begin with the raw amino-acid sequence, 376 residues long: Glutamate 5-kinase (376 aa).

ATP is bound at residue Lys-15. The substrate site is built by Ser-56, Asp-143, and Asn-155. 175–176 (SD) lines the ATP pocket. Residues 281-358 (KGTLTIDAGA…PDVMMILGIS (78 aa)) form the PUA domain.

It belongs to the glutamate 5-kinase family.

It localises to the cytoplasm. It catalyses the reaction L-glutamate + ATP = L-glutamyl 5-phosphate + ADP. The protein operates within amino-acid biosynthesis; L-proline biosynthesis; L-glutamate 5-semialdehyde from L-glutamate: step 1/2. Functionally, catalyzes the transfer of a phosphate group to glutamate to form L-glutamate 5-phosphate. This chain is Glutamate 5-kinase, found in Rhodopseudomonas palustris (strain BisB5).